We begin with the raw amino-acid sequence, 255 residues long: 5-oxoprolinase subunit A 1 (255 aa).

This sequence belongs to the LamB/PxpA family. As to quaternary structure, forms a complex composed of PxpA, PxpB and PxpC.

The catalysed reaction is 5-oxo-L-proline + ATP + 2 H2O = L-glutamate + ADP + phosphate + H(+). Its function is as follows. Catalyzes the cleavage of 5-oxoproline to form L-glutamate coupled to the hydrolysis of ATP to ADP and inorganic phosphate. In Bradyrhizobium diazoefficiens (strain JCM 10833 / BCRC 13528 / IAM 13628 / NBRC 14792 / USDA 110), this protein is 5-oxoprolinase subunit A 1.